The chain runs to 89 residues: MLDFLNRMFSRDGGNSKNIAKERLRLVLVHDRSSVSPEIVEALKEDLIKVISSYMEIDERSLEVNLNNDEASVALVANIPVLGLKRRNV.

This sequence belongs to the MinE family.

In terms of biological role, prevents the cell division inhibition by proteins MinC and MinD at internal division sites while permitting inhibition at polar sites. This ensures cell division at the proper site by restricting the formation of a division septum at the midpoint of the long axis of the cell. The protein is Cell division topological specificity factor of Heliobacterium modesticaldum (strain ATCC 51547 / Ice1).